Reading from the N-terminus, the 335-residue chain is Mitochondrial amidoxime reducing component 2 (335 aa).

A mitochondrion-targeting transit peptide spans 1-35 (MGASSSSALARLGLPARPWPRWLGVAALGLAAVAL). Residues K59, K138, and K144 each participate in a glycyl lysine isopeptide (Lys-Gly) (interchain with G-Cter in ubiquitin) cross-link. K156 carries the N6-acetyllysine; alternate modification. A Glycyl lysine isopeptide (Lys-Gly) (interchain with G-Cter in ubiquitin); alternate cross-link involves residue K156. Residues K166, K173, K187, K287, and K294 each participate in a glycyl lysine isopeptide (Lys-Gly) (interchain with G-Cter in ubiquitin) cross-link. Positions 188–334 (GRTSRKLLPT…LRVGDPVYRM (147 aa)) constitute an MOSC domain.

In terms of assembly, component of a complex composed of cytochrome b5, NADH-cytochrome b5 reductase (CYB5R3) and MTARC2. Mo-molybdopterin is required as a cofactor. In terms of processing, ubiquitinated by PRKN during mitophagy, leading to its degradation and enhancement of mitophagy. Deubiquitinated by USP30.

The protein resides in the mitochondrion outer membrane. The protein localises to the peroxisome. It catalyses the reaction N(omega)-hydroxy-L-arginine + 2 Fe(II)-[cytochrome b5] + 2 H(+) = L-arginine + 2 Fe(III)-[cytochrome b5] + H2O. Its function is as follows. Catalyzes the reduction of N-oxygenated molecules, acting as a counterpart of cytochrome P450 and flavin-containing monooxygenases in metabolic cycles. As a component of prodrug-converting system, reduces a multitude of N-hydroxylated prodrugs particularly amidoximes, leading to increased drug bioavailability. May be involved in mitochondrial N(omega)-hydroxy-L-arginine (NOHA) reduction, regulating endogenous nitric oxide levels and biosynthesis. Postulated to cleave the N-OH bond of N-hydroxylated substrates in concert with electron transfer from NADH to cytochrome b5 reductase then to cytochrome b5, the ultimate electron donor that primes the active site for substrate reduction. The protein is Mitochondrial amidoxime reducing component 2 of Homo sapiens (Human).